Consider the following 197-residue polypeptide: Small ribosomal subunit protein uS4y (197 aa).

The region spanning 109-183 is the S4 RNA-binding domain; that stretch reads RRLQTIVFKS…VKRRNERAGA (75 aa). A disordered region spans residues 161–197; the sequence is SLTSPFGGGRPGRVKRRNERAGAKKASGGDGDEDDEE.

The protein belongs to the universal ribosomal protein uS4 family. In terms of assembly, binds to the translation initiation factors TIF3E1.

In Arabidopsis thaliana (Mouse-ear cress), this protein is Small ribosomal subunit protein uS4y (RPS9C).